Consider the following 298-residue polypeptide: Uricase (298 aa).

Residues lysine 18 and threonine 63 each act as charge relay system in the active site. Urate is bound by residues threonine 63, aspartate 64, phenylalanine 165, arginine 182, valine 229, glutamine 230, and asparagine 256. Histidine 258 serves as the catalytic Charge relay system. A Microbody targeting signal motif is present at residues alanine 296–methionine 298.

It belongs to the uricase family. Homotetramer; dimer of dimers.

It is found in the peroxisome. The enzyme catalyses urate + O2 + H2O = 5-hydroxyisourate + H2O2. It participates in purine metabolism; urate degradation; (S)-allantoin from urate: step 1/3. With respect to regulation, competitively inhibited by xanthine. In terms of biological role, catalyzes the oxidation of uric acid to 5-hydroxyisourate, which is further processed to form (S)-allantoin. The protein is Uricase of Danio rerio (Zebrafish).